Consider the following 85-residue polypeptide: Cytochrome c6 (85 aa).

4 residues coordinate heme c: Cys14, Cys17, His18, and Met58.

This sequence belongs to the cytochrome c family. PetJ subfamily. As to quaternary structure, monomer. Binds 1 heme c group covalently per subunit.

It is found in the cellular thylakoid lumen. In terms of biological role, functions as an electron carrier between membrane-bound cytochrome b6-f and photosystem I in oxygenic photosynthesis. The protein is Cytochrome c6 (petJ) of Leptolyngbya boryana (Plectonema boryanum).